The following is a 552-amino-acid chain: Phosphoglucomutase (552 aa).

The active-site Phosphoserine intermediate is the Ser143. Residues Ser143, Asp295, Asp297, and Asp299 each coordinate Mg(2+).

This sequence belongs to the phosphohexose mutase family. It depends on Mg(2+) as a cofactor.

The enzyme catalyses alpha-D-glucose 1-phosphate = alpha-D-glucose 6-phosphate. Its pathway is glycolipid metabolism; diglucosyl-diacylglycerol biosynthesis. In terms of biological role, catalyzes the interconversion between glucose-6-phosphate and alpha-glucose-1-phosphate. This is the first step in the biosynthesis of diglucosyl-diacylglycerol (Glc2-DAG), i.e. the predominant glycolipid found in the S.aureus membrane, which is also used as a membrane anchor for lipoteichoic acid (LTA). This Staphylococcus aureus (strain bovine RF122 / ET3-1) protein is Phosphoglucomutase (pgcA).